Here is a 282-residue protein sequence, read N- to C-terminus: Transcription factor MYB20 (282 aa).

HTH myb-type domains follow at residues 9–61 (KVGL…TNYL) and 62–116 (RPDL…KKKL). 2 consecutive DNA-binding regions (H-T-H motif) follow at residues 37–61 (WRAV…TNYL) and 89–112 (WSKI…NTHI).

In terms of tissue distribution, expressed in chalaza of mature seeds, cotyledons, rosette leaves, cauline leaves, veins of stems, mature siliques, sepals and styles. Expressed at low levels in roots.

The protein resides in the nucleus. Its function is as follows. Transcription factor that acts as a positive regulator of abscisic acid (ABA) signaling in response to salt stress. Acts as a negative regulator ABI1, ABI2 and PP2CA, which are protein phosphatases 2C acting as negative regulator of ABA signaling. Binds to the DNA specific sequence and core element 5'-ACGT-3' found in the promoters of ABI1 and PP2CA to negatively regulate their expression during ABA-dependent salt stress response. The sequence is that of Transcription factor MYB20 from Arabidopsis thaliana (Mouse-ear cress).